Here is a 320-residue protein sequence, read N- to C-terminus: Membrane protein insertase YidC 2 (320 aa).

Residues 1 to 23 (MKNLKKKLTLTGLMTAGLLFLSG) form the signal peptide. Cysteine 24 carries N-palmitoyl cysteine lipidation. Cysteine 24 carries the S-diacylglycerol cysteine lipid modification. 5 helical membrane-spanning segments follow: residues 68 to 88 (YGWG…PLGL), 142 to 162 (MLSS…IALY), 178 to 198 (GIPL…LYFI), 217 to 237 (AMLI…PAGV), and 239 to 259 (LYWA…TFIM). The segment at 270–320 (EFTKNPPKINNEGLKDVTPTSVQENFKEITSERNEKERKSGGRNAGKQNRK) is disordered. Positions 294 to 309 (NFKEITSERNEKERKS) are enriched in basic and acidic residues.

The protein belongs to the OXA1/ALB3/YidC family. Type 2 subfamily.

The protein resides in the cell membrane. Functionally, required for the insertion and/or proper folding and/or complex formation of integral membrane proteins into the membrane. Involved in integration of membrane proteins that insert both dependently and independently of the Sec translocase complex, as well as at least some lipoproteins. The chain is Membrane protein insertase YidC 2 from Lactococcus lactis subsp. lactis (strain IL1403) (Streptococcus lactis).